We begin with the raw amino-acid sequence, 504 residues long: GTPase Der (504 aa).

In terms of domain architecture, EngA-type G 1 spans 4–168 (PVVALVGRPN…QVLAPFAEKM (165 aa)). Residues 10–17 (GRPNVGKS), 57–61 (DTGGI), and 120–123 (NKTD) each bind GTP. Basic and acidic residues predominate over residues 168–179 (MENADENDRTSE). Positions 168–191 (MENADENDRTSEEEQDEWEQEFDF) are disordered. Over residues 180 to 191 (EEQDEWEQEFDF) the composition is skewed to acidic residues. One can recognise an EngA-type G 2 domain in the interval 216 to 389 (IKIAIVGRPN…SIKEAYACAT (174 aa)). GTP is bound by residues 222 to 229 (GRPNVGKS), 269 to 273 (DTAGV), and 334 to 337 (NKWD). The region spanning 390 to 474 (QKMTTSLLTR…PIRLLFQEGS (85 aa)) is the KH-like domain.

This sequence belongs to the TRAFAC class TrmE-Era-EngA-EngB-Septin-like GTPase superfamily. EngA (Der) GTPase family. In terms of assembly, associates with the 50S ribosomal subunit.

In terms of biological role, GTPase that plays an essential role in the late steps of ribosome biogenesis. The sequence is that of GTPase Der from Haemophilus influenzae (strain ATCC 51907 / DSM 11121 / KW20 / Rd).